Consider the following 465-residue polypeptide: Siroheme synthase (465 aa).

Positions 1 to 203 are precorrin-2 dehydrogenase /sirohydrochlorin ferrochelatase; sequence MEYLPLFHNL…GRTAEAERLL (203 aa). Residues 22–23 and 43–44 contribute to the NAD(+) site; these read EI and PS. Phosphoserine is present on serine 128. Residues 216 to 465 form a uroporphyrinogen-III C-methyltransferase region; the sequence is GEVYLVGAGP…WFEGAQAAGR (250 aa). Residue proline 225 coordinates S-adenosyl-L-methionine. Aspartate 248 serves as the catalytic Proton acceptor. Lysine 270 serves as the catalytic Proton donor. S-adenosyl-L-methionine-binding positions include 301-303, isoleucine 306, 331-332, methionine 383, and glycine 412; these read GGD and TA.

The protein in the N-terminal section; belongs to the precorrin-2 dehydrogenase / sirohydrochlorin ferrochelatase family. It in the C-terminal section; belongs to the precorrin methyltransferase family.

The catalysed reaction is uroporphyrinogen III + 2 S-adenosyl-L-methionine = precorrin-2 + 2 S-adenosyl-L-homocysteine + H(+). The enzyme catalyses precorrin-2 + NAD(+) = sirohydrochlorin + NADH + 2 H(+). It catalyses the reaction siroheme + 2 H(+) = sirohydrochlorin + Fe(2+). It functions in the pathway cofactor biosynthesis; adenosylcobalamin biosynthesis; precorrin-2 from uroporphyrinogen III: step 1/1. It participates in cofactor biosynthesis; adenosylcobalamin biosynthesis; sirohydrochlorin from precorrin-2: step 1/1. The protein operates within porphyrin-containing compound metabolism; siroheme biosynthesis; precorrin-2 from uroporphyrinogen III: step 1/1. Its pathway is porphyrin-containing compound metabolism; siroheme biosynthesis; siroheme from sirohydrochlorin: step 1/1. It functions in the pathway porphyrin-containing compound metabolism; siroheme biosynthesis; sirohydrochlorin from precorrin-2: step 1/1. Its function is as follows. Multifunctional enzyme that catalyzes the SAM-dependent methylations of uroporphyrinogen III at position C-2 and C-7 to form precorrin-2 via precorrin-1. Then it catalyzes the NAD-dependent ring dehydrogenation of precorrin-2 to yield sirohydrochlorin. Finally, it catalyzes the ferrochelation of sirohydrochlorin to yield siroheme. The chain is Siroheme synthase from Stutzerimonas stutzeri (strain A1501) (Pseudomonas stutzeri).